The following is a 596-amino-acid chain: Sensor protein ChvG (596 aa).

The segment at 1–22 (MLKKTPETVSDSDDAEERGSER) is disordered. The Cytoplasmic segment spans residues 1–47 (MLKKTPETVSDSDDAEERGSERRHRIHPLTIIRRIFGNAVFSSLTRR). Residues 48-68 (ILFFNVAATVVLVGGILYLNQ) form a helical membrane-spanning segment. The Periplasmic portion of the chain corresponds to 69–283 (FREGLIDARV…VHAERLAIMR (215 aa)). Residues 284–304 (VFGIATLVNIVLSLLLSSTIA) traverse the membrane as a helical segment. An HAMP domain is found at 301–356 (STIATPLRRLSAAAIRVRRGARTREEIPDFSARQDEIGNLSIALREMTTALYDRID). At 305-596 (TPLRRLSAAA…SLPAAETHER (292 aa)) the chain is on the cytoplasmic side. Positions 364–592 (DVSHELKNPL…RFTLSLPAAE (229 aa)) constitute a Histidine kinase domain. His-367 carries the phosphohistidine modification.

The protein resides in the cell inner membrane. The enzyme catalyses ATP + protein L-histidine = ADP + protein N-phospho-L-histidine.. Its function is as follows. Member of a two-component regulatory system ChvG/ChvI. Activates ChvI by phosphorylation (Potential). The chain is Sensor protein ChvG (chvG) from Agrobacterium fabrum (strain C58 / ATCC 33970) (Agrobacterium tumefaciens (strain C58)).